A 124-amino-acid chain; its full sequence is Fluoride-specific ion channel FluC (124 aa).

The next 4 membrane-spanning stretches (helical) occupy residues 4–24 (LLLV…ISIF), 35–55 (FGTL…YALG), 60–80 (ISPE…TTFS), and 102–122 (VVLN…LVFS). 2 residues coordinate Na(+): Gly74 and Thr77.

It belongs to the fluoride channel Fluc/FEX (TC 1.A.43) family.

The protein localises to the cell inner membrane. The enzyme catalyses fluoride(in) = fluoride(out). With respect to regulation, na(+) is not transported, but it plays an essential structural role and its presence is essential for fluoride channel function. Fluoride-specific ion channel. Important for reducing fluoride concentration in the cell, thus reducing its toxicity. The sequence is that of Fluoride-specific ion channel FluC from Shewanella baltica (strain OS223).